Reading from the N-terminus, the 384-residue chain is Probable protein phosphatase 2C 42 (384 aa).

Positions 58–358 constitute a PPM-type phosphatase domain; it reads DFSMAVIQAN…DDITVIVVFL (301 aa). Mn(2+) contacts are provided by Asp-89, Gly-90, Asp-290, and Asp-349.

This sequence belongs to the PP2C family. Mg(2+) is required as a cofactor. Requires Mn(2+) as cofactor.

It carries out the reaction O-phospho-L-seryl-[protein] + H2O = L-seryl-[protein] + phosphate. The catalysed reaction is O-phospho-L-threonyl-[protein] + H2O = L-threonyl-[protein] + phosphate. Functionally, dephosphorylates and represses plasma membrane H(+)-ATPases (PM H(+)-ATPases, e.g. AHA1 and AHA2), thus influencing negatively plant growth and fitness. Promotes the apical hook maintenance of etiolated seedlings. In Arabidopsis thaliana (Mouse-ear cress), this protein is Probable protein phosphatase 2C 42.